A 305-amino-acid polypeptide reads, in one-letter code: tRNA-cytidine(32) 2-sulfurtransferase (305 aa).

The disordered stretch occupies residues 1–20 (MTAVLPLPQPLADPAPRDPR). The short motif at 59-64 (SGGKDS) is the PP-loop motif element. Residues cysteine 134, cysteine 137, and cysteine 225 each contribute to the [4Fe-4S] cluster site. The tract at residues 282–305 (DAPSGLDPDPRAWLSAGHATHDSD) is disordered.

It belongs to the TtcA family. Homodimer. Mg(2+) is required as a cofactor. It depends on [4Fe-4S] cluster as a cofactor.

Its subcellular location is the cytoplasm. It catalyses the reaction cytidine(32) in tRNA + S-sulfanyl-L-cysteinyl-[cysteine desulfurase] + AH2 + ATP = 2-thiocytidine(32) in tRNA + L-cysteinyl-[cysteine desulfurase] + A + AMP + diphosphate + H(+). Its pathway is tRNA modification. Functionally, catalyzes the ATP-dependent 2-thiolation of cytidine in position 32 of tRNA, to form 2-thiocytidine (s(2)C32). The sulfur atoms are provided by the cysteine/cysteine desulfurase (IscS) system. This is tRNA-cytidine(32) 2-sulfurtransferase from Xanthomonas axonopodis pv. citri (strain 306).